The chain runs to 130 residues: Protein lgg-2 (130 aa).

Gly-130 carries the Phosphatidylethanolamine amidated glycine lipid modification.

It belongs to the ATG8 family. As to quaternary structure, may interact with vps-39. Interacts with lgg-3; the interaction is direct. Interacts with atg-16.1 (via WD domain) and atg-16.2 (via WD 5-6 repeats); the interactions are direct. Interacts with sepa-1 (via the LIR motifs); the interaction is direct. Interacts with sqst-1 (via the LIR motifs); the interaction is direct. Interacts with epg-2 (via the LIR motifs); the interaction is weak. Interacts with atg-7; the interaction is direct. Interacts with atg-3. The interaction with atg-7 and atg-3 may be required for the lipidation of lgg-2. In terms of processing, this protein is subject to lipidation. Lipidation is regulated by lgg-1.

It is found in the cytoplasmic vesicle. The protein resides in the autophagosome. Its subcellular location is the cytoplasm. The protein localises to the cell membrane. Ubiquitin-like modifier involved in the formation of autophagosomal vacuoles (autophagosomes). When lipidated mediates tethering between adjacent membranes and stimulates membrane fusion. Less effective at promoting membrane fusion than lgg-1. Acts upstream of the autophagy protein epg-5 in the aggrephagy pathway, which is the macroautophagic degradation of ubiquitinated protein aggregates, and preferentially interacts with autophagy proteins and substrates containing LIR motifs to mediate autophagosome formation and protein aggregate degradation. In particular binds to components of an atg-5-lgg-3-atg-16 complex to regulate autophagosome formation and cargo sequestration. Required for the degradation of specific sqst-1-containing aggregates during embryogenesis and the early stages of larval development. Involved in allophagy, which is an autophagic process in which paternal mitochondria and organelles are degraded during fertilization, and moreover is required for the degradation of lgg-1-positive allophagic autophagosomes in embryos. Involved in xenophagy, the autophagy-mediated degradation of pathogens and pathogen products, such as toxins. Also plays a role in membrane-pore repair. Through HOPS complex subunit vps-39, tethers lysosomes with autophagosomes to form autolysosomes. Plays a role in the distribution and clearance of germ cell specific P-granules from somatic cells to ensure exclusive localization of the P-granules in germ cells. Essential for dauer development and life-span extension. The sequence is that of Protein lgg-2 from Caenorhabditis elegans.